We begin with the raw amino-acid sequence, 376 residues long: Ribonucleoside-diphosphate reductase subunit beta (376 aa).

Residues Asp-85, Glu-116, and His-119 each coordinate Fe cation. Tyr-123 is an active-site residue. Fe cation contacts are provided by Glu-205, Glu-239, and His-242.

It belongs to the ribonucleoside diphosphate reductase small chain family. As to quaternary structure, tetramer of two alpha and two beta subunits. Fe cation is required as a cofactor.

It carries out the reaction a 2'-deoxyribonucleoside 5'-diphosphate + [thioredoxin]-disulfide + H2O = a ribonucleoside 5'-diphosphate + [thioredoxin]-dithiol. In terms of biological role, provides the precursors necessary for DNA synthesis. Catalyzes the biosynthesis of deoxyribonucleotides from the corresponding ribonucleotides. The polypeptide is Ribonucleoside-diphosphate reductase subunit beta (nrdB) (Haemophilus influenzae (strain ATCC 51907 / DSM 11121 / KW20 / Rd)).